A 234-amino-acid chain; its full sequence is Phosphoglycolate phosphatase (234 aa).

Aspartate 15 (nucleophile) is an active-site residue. 3 residues coordinate Mg(2+): aspartate 15, aspartate 17, and aspartate 177.

This sequence belongs to the HAD-like hydrolase superfamily. CbbY/CbbZ/Gph/YieH family. In terms of assembly, monomer. Requires Mg(2+) as cofactor. It depends on chloride as a cofactor.

It carries out the reaction 2-phosphoglycolate + H2O = glycolate + phosphate. The protein operates within organic acid metabolism; glycolate biosynthesis; glycolate from 2-phosphoglycolate: step 1/1. Functionally, specifically catalyzes the dephosphorylation of 2-phosphoglycolate. Is involved in the dissimilation of the intracellular 2-phosphoglycolate formed during the DNA repair of 3'-phosphoglycolate ends, a major class of DNA lesions induced by oxidative stress. The polypeptide is Phosphoglycolate phosphatase (Photorhabdus laumondii subsp. laumondii (strain DSM 15139 / CIP 105565 / TT01) (Photorhabdus luminescens subsp. laumondii)).